The primary structure comprises 101 residues: Small ribosomal subunit protein uS14 (101 aa).

This sequence belongs to the universal ribosomal protein uS14 family. Part of the 30S ribosomal subunit. Contacts proteins S3 and S10.

Binds 16S rRNA, required for the assembly of 30S particles and may also be responsible for determining the conformation of the 16S rRNA at the A site. This chain is Small ribosomal subunit protein uS14, found in Rhizobium meliloti (strain 1021) (Ensifer meliloti).